Here is a 223-residue protein sequence, read N- to C-terminus: 7-cyano-7-deazaguanine synthase (223 aa).

10-20 (FSGGQDSTTCL) provides a ligand contact to ATP. The Zn(2+) site is built by Cys188, Cys197, Cys200, and Cys203.

The protein belongs to the QueC family. Requires Zn(2+) as cofactor.

It carries out the reaction 7-carboxy-7-deazaguanine + NH4(+) + ATP = 7-cyano-7-deazaguanine + ADP + phosphate + H2O + H(+). The protein operates within purine metabolism; 7-cyano-7-deazaguanine biosynthesis. Catalyzes the ATP-dependent conversion of 7-carboxy-7-deazaguanine (CDG) to 7-cyano-7-deazaguanine (preQ(0)). This is 7-cyano-7-deazaguanine synthase from Phocaeicola vulgatus (strain ATCC 8482 / DSM 1447 / JCM 5826 / CCUG 4940 / NBRC 14291 / NCTC 11154) (Bacteroides vulgatus).